The following is a 209-amino-acid chain: NADH-ubiquinone oxidoreductase subunit 9 (209 aa).

The protein belongs to the complex I 30 kDa subunit family. In terms of assembly, complex I is composed of about 30 different subunits.

The protein resides in the mitochondrion inner membrane. The catalysed reaction is a ubiquinone + NADH + 5 H(+)(in) = a ubiquinol + NAD(+) + 4 H(+)(out). Its function is as follows. Core subunit of the mitochondrial membrane respiratory chain NADH dehydrogenase (Complex I) that is believed to belong to the minimal assembly required for catalysis. Complex I functions in the transfer of electrons from NADH to the respiratory chain. The immediate electron acceptor for the enzyme is believed to be ubiquinone. This chain is NADH-ubiquinone oxidoreductase subunit 9 (nad9), found in Dictyostelium citrinum (Slime mold).